A 59-amino-acid chain; its full sequence is Large ribosomal subunit protein bL32 (59 aa).

Belongs to the bacterial ribosomal protein bL32 family.

The polypeptide is Large ribosomal subunit protein bL32 (Rhizorhabdus wittichii (strain DSM 6014 / CCUG 31198 / JCM 15750 / NBRC 105917 / EY 4224 / RW1) (Sphingomonas wittichii)).